The chain runs to 255 residues: MTLEIEQFMCRSDNFGILARDSETGITALVDAPEEQAILEAIKRTGWTPSLLLITHHHADHVEANLALKERFGLTIIGPAKEASKIPGIDRQVNEGDVVRVGNQEARVIETPGHTAGHITFYFAKAGIAFTADTLFALGCGRLFECKPPVMYESLKKLVELPLETVIYCGHEYTESNARFALSVDPTNSALKERAKKIEALRREGRPTLPTTLGEEMATNPFLRCHDPVLRNNLGMKNAADVEVFAEIRKRKDVF.

Residues His56, His58, Asp60, His61, His114, Asp133, and His171 each contribute to the Zn(2+) site.

The protein belongs to the metallo-beta-lactamase superfamily. Glyoxalase II family. In terms of assembly, monomer. It depends on Zn(2+) as a cofactor.

The enzyme catalyses an S-(2-hydroxyacyl)glutathione + H2O = a 2-hydroxy carboxylate + glutathione + H(+). Its pathway is secondary metabolite metabolism; methylglyoxal degradation; (R)-lactate from methylglyoxal: step 2/2. Functionally, thiolesterase that catalyzes the hydrolysis of S-D-lactoyl-glutathione to form glutathione and D-lactic acid. The chain is Hydroxyacylglutathione hydrolase from Chelativorans sp. (strain BNC1).